Here is a 360-residue protein sequence, read N- to C-terminus: MYCLLRRLLFLLPPEWVHKLVFAVLRGATAATPVRRMLTRWLGPTDPVLASTVFGVRFPGPLGLAAGFDKDGTGLDTWAAMGFGYAEVGTVTAHPQPGNPAPRLFRLPEDRALLNRMGFNNHGAGALAIRLACHHPEVPVGVNIGKTKTTPADQAVDDYRASARLVGPLASYLVVNVSSPNTPGLRDLQAVESLRPILAAVLAETSTPVLVKIAPDLSDSDVDEVADLAVELGLAGIVATNTTVSRDGLLTPGVGQLGAGGISGPPVAERSLEVLRRLYQRVGDRLTLISVGGIETAEDAWDRITAGASLLQGYTGFIYGGGLWSKHIHDGIARRLHQGGFGSLHEAVGSNAAERGRPPS.

Residues 66–70 (AGFDK) and Thr90 contribute to the FMN site. A substrate-binding site is contributed by Lys70. 115–119 (NRMGF) contributes to the substrate binding site. 2 residues coordinate FMN: Asn143 and Asn176. A substrate-binding site is contributed by Asn176. Ser179 acts as the Nucleophile in catalysis. Asn181 provides a ligand contact to substrate. FMN contacts are provided by Lys212 and Thr240. 241 to 242 (NT) is a substrate binding site. Residues Gly264, Gly293, and 314 to 315 (YT) each bind FMN.

Belongs to the dihydroorotate dehydrogenase family. Type 2 subfamily. In terms of assembly, monomer. FMN serves as cofactor.

Its subcellular location is the cell membrane. It catalyses the reaction (S)-dihydroorotate + a quinone = orotate + a quinol. It functions in the pathway pyrimidine metabolism; UMP biosynthesis via de novo pathway; orotate from (S)-dihydroorotate (quinone route): step 1/1. In terms of biological role, catalyzes the conversion of dihydroorotate to orotate with quinone as electron acceptor. The polypeptide is Dihydroorotate dehydrogenase (quinone) (Mycobacterium ulcerans (strain Agy99)).